We begin with the raw amino-acid sequence, 278 residues long: Phosphatidylglycerol--prolipoprotein diacylglyceryl transferase (278 aa).

Helical transmembrane passes span 13–33, 50–70, and 89–109; these read LFGI…ALAV, VFDF…LYYV, and NGGL…FFFT. Arg135 contributes to the a 1,2-diacyl-sn-glycero-3-phospho-(1'-sn-glycerol) binding site. 3 helical membrane-spanning segments follow: residues 175-195, 205-225, and 236-256; these read QPTF…LVLL, GEVF…IEGL, and IRVS…IVIV.

Belongs to the Lgt family.

It is found in the cell membrane. The enzyme catalyses L-cysteinyl-[prolipoprotein] + a 1,2-diacyl-sn-glycero-3-phospho-(1'-sn-glycerol) = an S-1,2-diacyl-sn-glyceryl-L-cysteinyl-[prolipoprotein] + sn-glycerol 1-phosphate + H(+). It participates in protein modification; lipoprotein biosynthesis (diacylglyceryl transfer). Its function is as follows. Catalyzes the transfer of the diacylglyceryl group from phosphatidylglycerol to the sulfhydryl group of the N-terminal cysteine of a prolipoprotein, the first step in the formation of mature lipoproteins. The protein is Phosphatidylglycerol--prolipoprotein diacylglyceryl transferase of Enterococcus faecalis (strain ATCC 700802 / V583).